A 535-amino-acid chain; its full sequence is Peptide chain release factor 3 (535 aa).

In terms of domain architecture, tr-type G spans 8-276 (ARRRTFAIIS…ALVDLAPQPG (269 aa)). Residues 17–24 (SHPDAGKT), 85–89 (DTPGH), and 139–142 (NKMD) contribute to the GTP site.

The protein belongs to the TRAFAC class translation factor GTPase superfamily. Classic translation factor GTPase family. PrfC subfamily.

It localises to the cytoplasm. Its function is as follows. Increases the formation of ribosomal termination complexes and stimulates activities of RF-1 and RF-2. It binds guanine nucleotides and has strong preference for UGA stop codons. It may interact directly with the ribosome. The stimulation of RF-1 and RF-2 is significantly reduced by GTP and GDP, but not by GMP. This chain is Peptide chain release factor 3, found in Bordetella avium (strain 197N).